A 280-amino-acid polypeptide reads, in one-letter code: Lipase chaperone (280 aa).

The chain crosses the membrane as a helical span at residues 5–22; that stretch reads ALTIITIASGSLGAVYFL.

This sequence belongs to the lipase chaperone family.

Its subcellular location is the cell inner membrane. Functionally, may be involved in the folding of the extracellular lipase during its passage through the periplasm. This Vibrio vulnificus (strain YJ016) protein is Lipase chaperone (lifO).